Reading from the N-terminus, the 101-residue chain is UPF0473 protein spr0177 (101 aa).

Belongs to the UPF0473 family.

This Streptococcus pneumoniae (strain ATCC BAA-255 / R6) protein is UPF0473 protein spr0177.